Here is a 589-residue protein sequence, read N- to C-terminus: Probable translation initiation factor IF-2 (589 aa).

A tr-type G domain is found at Ile5–Leu219. The G1 stretch occupies residues Gly14 to Thr21. Residue Gly14–Thr21 participates in GTP binding. Residues Ala39–His43 form a G2 region. The segment at Asp75–Gly78 is G3. Residues Asp75–His79 and Thr129–Asp132 contribute to the GTP site. Residues Thr129–Asp132 form a G4 region. The G5 stretch occupies residues Ser197–Met199.

This sequence belongs to the TRAFAC class translation factor GTPase superfamily. Classic translation factor GTPase family. IF-2 subfamily.

In terms of biological role, function in general translation initiation by promoting the binding of the formylmethionine-tRNA to ribosomes. Seems to function along with eIF-2. The sequence is that of Probable translation initiation factor IF-2 from Methanocorpusculum labreanum (strain ATCC 43576 / DSM 4855 / Z).